The sequence spans 209 residues: uncharacterized protein (209 aa).

This is an uncharacterized protein from Escherichia coli (strain K12).